A 686-amino-acid chain; its full sequence is Chromatin modification-related protein EAF1 (686 aa).

The segment at 71-97 (QMKRRQNDHHNQGPPPKVQKSTVDSLK) is disordered. The region spanning 202–280 (FKFIRKSKKK…DKSIIRNLPV (79 aa)) is the HSA domain. Positions 354–418 (IPTIWLPEDD…FERYIQLNDK (65 aa)) constitute a Myb-like domain. Disordered stretches follow at residues 493-517 (RKST…RIPT), 544-617 (ARMV…QQRR), and 657-686 (QQGY…PNNA). The span at 497-506 (AELQANQNVT) shows a compositional bias: polar residues. The span at 554–568 (APAPAPAPPPPPPPK) shows a compositional bias: pro residues. Over residues 574 to 588 (TTPNGTPLTNEQIQH) the composition is skewed to polar residues. Residues 599–613 (LQQQQQQQQQQQHQQ) are compositionally biased toward low complexity. Residues 671-686 (QKNQTASPMSGSPNNA) show a composition bias toward polar residues.

The protein belongs to the EAF1 family. In terms of assembly, component of the NuA4 histone acetyltransferase complex.

The protein resides in the nucleus. In terms of biological role, component of the NuA4 histone acetyltransferase complex which is involved in transcriptional activation of selected genes principally by acetylation of nucleosomal histone H4 and H2A. The NuA4 complex is also involved in DNA repair. The polypeptide is Chromatin modification-related protein EAF1 (VID21) (Candida albicans (strain SC5314 / ATCC MYA-2876) (Yeast)).